The primary structure comprises 476 residues: Probable isoprenylcysteine alpha-carbonyl methylesterase ICMEL1 (476 aa).

Over residues 92-104 (NCLSAFSDDTNGT) the composition is skewed to polar residues. Positions 92-116 (NCLSAFSDDTNGTADGGNNSGDRQT) are disordered. The next 2 helical transmembrane spans lie at 153–173 (FMAL…VGYY) and 208–228 (VVAF…GSLL). Substrate-binding positions include 214–216 (GGA) and 285–287 (QSA). Active-site residues include Ser-286, Asp-388, and His-420.

The protein belongs to the AB hydrolase superfamily. Isoprenylcysteine methylesterase family. As to expression, expressed in roots, rosette and cauline leaves, stems, flowers and siliques.

The protein resides in the endoplasmic reticulum membrane. Its subcellular location is the golgi apparatus membrane. It carries out the reaction [protein]-C-terminal S-[(2E,6E)-farnesyl]-L-cysteine methyl ester + H2O = [protein]-C-terminal S-[(2E,6E)-farnesyl]-L-cysteine + methanol + H(+). Functionally, catalyzes the demethylation of isoprenylcysteine methylesters. May be involved in the regulation of ABA signaling. The chain is Probable isoprenylcysteine alpha-carbonyl methylesterase ICMEL1 from Arabidopsis thaliana (Mouse-ear cress).